The sequence spans 333 residues: Gap junction alpha-4 protein (333 aa).

Over 1-20 the chain is Cytoplasmic; it reads MGDWGFLEKLLDQVQEHSTV. Residues 21–40 form a helical membrane-spanning segment; that stretch reads VGKIWLTVLFIFRILILGLA. Residues 41 to 76 are Extracellular-facing; it reads GESVWGDEQSDFECNTAQPGCTNVCYDQAFPISHIR. The helical transmembrane segment at 77–99 threads the bilayer; it reads YWVLQFLFVSTPTLIYLGHVIYL. The Cytoplasmic portion of the chain corresponds to 100–148; sequence SRREERLRQKEGELRALPSKDPHVERALAAIEHQMAKISVAEDGRLRIR. A helical transmembrane segment spans residues 149–171; that stretch reads GALMGTYVISVLCKSVLEAGFLY. The Extracellular portion of the chain corresponds to 172-208; that stretch reads GQWRLYGWTMEPVFVCQRAPCPHVVDCYVSRPTEKTI. Residues 209–231 form a helical membrane-spanning segment; the sequence is FIIFMLVVGVISLVLNLLELVHL. Residues 232 to 333 are Cytoplasmic-facing; that stretch reads LCRCVSREIK…NSSASKKQYV (102 aa). Residues 292 to 333 are disordered; that stretch reads ANLTTEERLTSTRPPPFVNAAPQGGQKSSSRPNSSASKKQYV. The span at 318-333 shows a compositional bias: low complexity; that stretch reads KSSSRPNSSASKKQYV.

Belongs to the connexin family. Alpha-type (group II) subfamily. As to quaternary structure, a connexon is composed of a hexamer of connexins. In terms of tissue distribution, highly expressed in lung.

It is found in the cell membrane. The protein localises to the cell junction. Its subcellular location is the gap junction. Its function is as follows. One gap junction consists of a cluster of closely packed pairs of transmembrane channels, the connexons, through which materials of low MW diffuse from one cell to a neighboring cell. The protein is Gap junction alpha-4 protein (Gja4) of Rattus norvegicus (Rat).